The following is a 426-amino-acid chain: Probable M18 family aminopeptidase 2 (426 aa).

Zn(2+) contacts are provided by histidine 79, histidine 156, and histidine 399.

The protein belongs to the peptidase M18 family. It depends on Zn(2+) as a cofactor.

The polypeptide is Probable M18 family aminopeptidase 2 (apeB) (Mycobacterium leprae (strain TN)).